Reading from the N-terminus, the 418-residue chain is Actin-related protein 3-B (418 aa).

The protein belongs to the actin family. ARP3 subfamily. As to quaternary structure, component of the Arp2/3 complex composed of actr2/arp2, actr3/arp3, arpc1 (arpc1a or arpc1b), arpc2, arpc3, arpc4 and arpc5.

The protein localises to the cytoplasm. It is found in the cytoskeleton. It localises to the cell projection. The protein resides in the nucleus. In terms of biological role, ATP-binding component of the Arp2/3 complex, a multiprotein complex that mediates actin polymerization upon stimulation by nucleation-promoting factor (NPF). The Arp2/3 complex mediates the formation of branched actin networks in the cytoplasm, providing the force for cell motility. Seems to contact the pointed end of the daughter actin filament. In addition to its role in the cytoplasmic cytoskeleton, the Arp2/3 complex also promotes actin polymerization in the nucleus, thereby regulating gene transcription and repair of damaged DNA. The Arp2/3 complex promotes homologous recombination (HR) repair in response to DNA damage by promoting nuclear actin polymerization, leading to drive motility of double-strand breaks (DSBs). This chain is Actin-related protein 3-B (actr3-b), found in Xenopus laevis (African clawed frog).